We begin with the raw amino-acid sequence, 371 residues long: 4-hydroxyphenylpyruvate dioxygenase-like protein (371 aa).

VOC domains follow at residues 7-135 (RLCH…LLER) and 160-328 (RVDH…VFTK). Histidine 163, histidine 258, and glutamate 339 together coordinate Fe cation.

It belongs to the 4HPPD family. Fe cation serves as cofactor.

Its subcellular location is the mitochondrion. The enzyme catalyses 3-(4-hydroxyphenyl)pyruvate + O2 = (S)-4-hydroxymandelate + CO2. Functionally, iron-dependent dioxygenase that catalyzes the conversion of 4-hydroxyphenylpyruvate (4-HPPA) to 4-hydroxymandelate (4-HMA) in the mitochondria, one of the steps in the biosynthesis of coenzyme Q10 from tyrosine. The polypeptide is 4-hydroxyphenylpyruvate dioxygenase-like protein (Homo sapiens (Human)).